We begin with the raw amino-acid sequence, 211 residues long: Ribonuclease HII (211 aa).

In terms of domain architecture, RNase H type-2 spans 1 to 205; the sequence is MRFGVDEAGK…CDDVLAAASQ (205 aa). A divalent metal cation-binding residues include Asp6, Glu7, and Asp100.

It belongs to the RNase HII family. Mn(2+) serves as cofactor. The cofactor is Mg(2+).

Its subcellular location is the cytoplasm. It carries out the reaction Endonucleolytic cleavage to 5'-phosphomonoester.. Its function is as follows. Endonuclease that specifically degrades the RNA of RNA-DNA hybrids. This chain is Ribonuclease HII, found in Haloarcula marismortui (strain ATCC 43049 / DSM 3752 / JCM 8966 / VKM B-1809) (Halobacterium marismortui).